The chain runs to 422 residues: MAMTAAAVTVPLGVLLRREVTSERMERPDVLCGEAARSRKGEDFTLLLAEAGERVAGDPSTSFSVFALFDGHNGSGAAMYAKKNLLNNLLRAIPSGLSRDEWLAVLPRALVAAFVKTDKDFQAVAETSGTTVTFVVIDEWVVTVASVGDSRCILESADGSLYHLSADHRFDSNQDEVQRVTACGSKVGKLNLVGGPEVGPLRCWPGGLCLSRSIGDMDVGECIIPVPHVKQVKLSNAGGRIIIASDGVWDDLTFEMALECSRGFPSDIAANRIVNEAIHPRGLRDDTTCIVVDILPPEKLAPSPPTKRQGKIVFNNMFRRKHTDVSFILDREYAEPDEVEEIFDDGSAMLSKRLAAGYALQSMFEPFSCAVCQVQLKAGQGISVHSNPLQHEKLQGWQGPFLCQSCNEKKDAIEGKRPPRDS.

The PPM-type phosphatase domain occupies T45–I294. D70, G71, D246, and D285 together coordinate Mn(2+).

Belongs to the PP2C family. Requires Mg(2+) as cofactor. Mn(2+) is required as a cofactor.

The enzyme catalyses O-phospho-L-seryl-[protein] + H2O = L-seryl-[protein] + phosphate. It carries out the reaction O-phospho-L-threonyl-[protein] + H2O = L-threonyl-[protein] + phosphate. This chain is Probable protein phosphatase 2C 69, found in Oryza sativa subsp. japonica (Rice).